Consider the following 88-residue polypeptide: ATP synthase F(0) complex subunit f, mitochondrial (88 aa).

A2 carries the post-translational modification N-acetylalanine. Position 3 is a phosphoserine (S3). An N6-acetyllysine modification is found at K16. Residues 62–79 form a helical membrane-spanning segment; sequence MVLAAYVVFSYCISYKEL.

This sequence belongs to the ATPase F chain family. Component of the ATP synthase complex composed at least of ATP5F1A/subunit alpha, ATP5F1B/subunit beta, ATP5MC1/subunit c (homooctomer), MT-ATP6/subunit a, MT-ATP8/subunit 8, ATP5ME/subunit e, ATP5MF/subunit f, ATP5MG/subunit g, ATP5MK/subunit k, ATP5MJ/subunit j, ATP5F1C/subunit gamma, ATP5F1D/subunit delta, ATP5F1E/subunit epsilon, ATP5PF/subunit F6, ATP5PB/subunit b, ATP5PD/subunit d, ATP5PO/subunit OSCP. ATP synthase complex consists of a soluble F(1) head domain (subunits alpha(3) and beta(3)) - the catalytic core - and a membrane F(0) domain - the membrane proton channel (subunits c, a, 8, e, f, g, k and j). These two domains are linked by a central stalk (subunits gamma, delta, and epsilon) rotating inside the F1 region and a stationary peripheral stalk (subunits F6, b, d, and OSCP).

It is found in the mitochondrion. The protein localises to the mitochondrion inner membrane. Subunit f, of the mitochondrial membrane ATP synthase complex (F(1)F(0) ATP synthase or Complex V) that produces ATP from ADP in the presence of a proton gradient across the membrane which is generated by electron transport complexes of the respiratory chain. ATP synthase complex consist of a soluble F(1) head domain - the catalytic core - and a membrane F(1) domain - the membrane proton channel. These two domains are linked by a central stalk rotating inside the F(1) region and a stationary peripheral stalk. During catalysis, ATP synthesis in the catalytic domain of F(1) is coupled via a rotary mechanism of the central stalk subunits to proton translocation. In vivo, can only synthesize ATP although its ATP hydrolase activity can be activated artificially in vitro. Part of the complex F(0) domain. This is ATP synthase F(0) complex subunit f, mitochondrial from Rattus norvegicus (Rat).